A 427-amino-acid polypeptide reads, in one-letter code: Serine--tRNA ligase (427 aa).

231–233 contributes to the L-serine binding site; it reads TAE. 262-264 contributes to the ATP binding site; that stretch reads RSE. Residue Glu285 coordinates L-serine. Residue 349-352 participates in ATP binding; sequence EISS. Ser385 contributes to the L-serine binding site.

It belongs to the class-II aminoacyl-tRNA synthetase family. Type-1 seryl-tRNA synthetase subfamily. As to quaternary structure, homodimer. The tRNA molecule binds across the dimer.

The protein localises to the cytoplasm. The enzyme catalyses tRNA(Ser) + L-serine + ATP = L-seryl-tRNA(Ser) + AMP + diphosphate + H(+). The catalysed reaction is tRNA(Sec) + L-serine + ATP = L-seryl-tRNA(Sec) + AMP + diphosphate + H(+). It functions in the pathway aminoacyl-tRNA biosynthesis; selenocysteinyl-tRNA(Sec) biosynthesis; L-seryl-tRNA(Sec) from L-serine and tRNA(Sec): step 1/1. Functionally, catalyzes the attachment of serine to tRNA(Ser). Is also able to aminoacylate tRNA(Sec) with serine, to form the misacylated tRNA L-seryl-tRNA(Sec), which will be further converted into selenocysteinyl-tRNA(Sec). This is Serine--tRNA ligase from Rhizobium rhizogenes (strain K84 / ATCC BAA-868) (Agrobacterium radiobacter).